The primary structure comprises 187 residues: Calcium and integrin-binding family member 3 (187 aa).

3 EF-hand domains span residues 66–101 (KDNPFRQRIAQVFSEDGDGHMTLDNFLDMFSVMSEM), 103–138 (PRDLKAYYAFKIYDFNNDDYICAWDLEQTVTKLTRG), and 144–179 (EVSLVCEKVLDEADGDHDGRLSLEDFQNMILRAPDF). Residues D116, N118, D120, Y122, D127, D157, D159, D161, R163, and D168 each coordinate Ca(2+).

In terms of assembly, monomer and homodimer. Interacts with ITGA2B (via C-terminus cytoplasmic tail region); the interaction is stabilized/increased in a calcium and magnesium-dependent manner. Interacts with TMC1.

In terms of biological role, acts a an auxiliary subunit of the sensory mechanoelectrical transduction (MET) channel in hair cells. Plays a role in regulating hair cell MET channel localization and function. This Homo sapiens (Human) protein is Calcium and integrin-binding family member 3 (CIB3).